Reading from the N-terminus, the 538-residue chain is Cytochrome P450 monooxygenase flvC (538 aa).

The helical transmembrane segment at 17–37 (TVLIAGLLVYWVGSAIFLAVL) threads the bilayer. A heme-binding site is contributed by cysteine 478.

This sequence belongs to the cytochrome P450 family. It depends on heme as a cofactor.

The protein localises to the membrane. The catalysed reaction is pre-flavunoidine + reduced [NADPH--hemoprotein reductase] + O2 = 10-hydroxy-pre-flavunoidine + oxidized [NADPH--hemoprotein reductase] + H2O + H(+). It functions in the pathway secondary metabolite biosynthesis; terpenoid biosynthesis. Functionally, cytochrome P450 monooxygenase; part of the gene cluster that mediates the biosynthesis of flavunoidine, an alkaloidal terpenoid with a tetracyclic cage-like core connected to dimethylcadaverine via a C-N bond and acylated with 5,5-dimethyl-L-pipecolate. The tetracyclic core is synthesized by the terpene cyclase flvE and the cytochrome P450 monooxygenase flvD. The terpene cyclase flvE catalyzes the cyclization of farnesyl pyrophosphate (FPP) to form (1R,4R,5S)-(+)-acoradiene and the cytochrome P450 monooxygenase flvD is then responsible for oxidative conversion of (1R,4R,5S)-(+)-acoradiene into the tetracyclic cage present in the final product flavunoidine. In parallel, the N-methyltransferase flvH dimethylates L-lysine to give N,N-dimethyl-L-Lysin which is decarboxylated by flvG to afford dimethylcadaverine. The terpene cyclase-like protein flvF is the enzyme that attaches the dimethylcadaverine precusor at the C-7 of the tetracyclic cage to yield pre-flavunoidine. The cytochrome monooxygenase flvC hydroxylates the C-10 position of pre-flavunoidine whereas the NRPS flvI acylates the terpenoid core at the hydroxylated C-10 with dimethylpipecolate to yield final flavunoidine. The bifunctional enzyme flvA and the dehydrogenase flvB are responsible for the synthesis of the dimethylpipecolate precursor. The PLP-dependent lyase domain of flvA might use L-O-acetyl-homoserine and alpha-keto-isovalerate to form an intermediary ketone that can cyclize intramolecularly to yield an imine. The imine can be reduced by flvB to yield the 6-carboxylated pipecolate. The C-terminal alpha-KG-dependent oxygenase domain of flvA is then proposed to catalyze the decarboxylation to yield dimethylpipecolate. The protein is Cytochrome P450 monooxygenase flvC of Aspergillus flavus (strain ATCC 200026 / FGSC A1120 / IAM 13836 / NRRL 3357 / JCM 12722 / SRRC 167).